A 199-amino-acid chain; its full sequence is N-(5'-phosphoribosyl)anthranilate isomerase (199 aa).

This sequence belongs to the TrpF family.

It catalyses the reaction N-(5-phospho-beta-D-ribosyl)anthranilate = 1-(2-carboxyphenylamino)-1-deoxy-D-ribulose 5-phosphate. It participates in amino-acid biosynthesis; L-tryptophan biosynthesis; L-tryptophan from chorismate: step 3/5. The protein is N-(5'-phosphoribosyl)anthranilate isomerase of Streptococcus pneumoniae (strain Hungary19A-6).